A 195-amino-acid chain; its full sequence is Holliday junction branch migration complex subunit RuvA (195 aa).

The interval 1–64 is domain I; it reads MIASIRGIIQ…EDALTLYGFS (64 aa). The tract at residues 65-142 is domain II; the sequence is DPAQRNLFEQ…DLRQLSGTTP (78 aa). Residues 143–151 are flexible linker; sequence GNVSTLDRE. Residues 151–195 are domain III; sequence ELTDILISLGYSATEAAAAIAALPGDAPPTLEERLRLALRYFGSA.

The protein belongs to the RuvA family. In terms of assembly, homotetramer. Forms an RuvA(8)-RuvB(12)-Holliday junction (HJ) complex. HJ DNA is sandwiched between 2 RuvA tetramers; dsDNA enters through RuvA and exits via RuvB. An RuvB hexamer assembles on each DNA strand where it exits the tetramer. Each RuvB hexamer is contacted by two RuvA subunits (via domain III) on 2 adjacent RuvB subunits; this complex drives branch migration. In the full resolvosome a probable DNA-RuvA(4)-RuvB(12)-RuvC(2) complex forms which resolves the HJ.

The protein localises to the cytoplasm. In terms of biological role, the RuvA-RuvB-RuvC complex processes Holliday junction (HJ) DNA during genetic recombination and DNA repair, while the RuvA-RuvB complex plays an important role in the rescue of blocked DNA replication forks via replication fork reversal (RFR). RuvA specifically binds to HJ cruciform DNA, conferring on it an open structure. The RuvB hexamer acts as an ATP-dependent pump, pulling dsDNA into and through the RuvAB complex. HJ branch migration allows RuvC to scan DNA until it finds its consensus sequence, where it cleaves and resolves the cruciform DNA. This Chloroflexus aurantiacus (strain ATCC 29364 / DSM 637 / Y-400-fl) protein is Holliday junction branch migration complex subunit RuvA.